An 811-amino-acid chain; its full sequence is MERYKGLERLLSELEEFLFILDKENLSSAAVLKKSIVSEILQLFIKSNSSCDEEYIYMNKVLETDKKEAQGKQGKAQVLDPPAKETLTNGTAGQHLAPPQKSLPDLPPPKIITEKLPVSKCDSPEGYYEEAEPYNASFNDDGEAVSSSYESYDEDESNKSKSAMQQHQWPSTEASIELMKDAMICAFLWRKKWLGQWAKQLCVVKDTRLMCYKTSKDHNPQLDVNLIGCSVSYKEKQVRRKEHKLKITPTNTDVIVLGMQSKEQAEQWLKVIQDISGLQSDPLCDSSVITADGQRQIHPKAEGTDRHSGASESGSSTDGHPETPEIKEVKKKVTSGLKLSNLMNLGRKKSTSMESPDKALETSNYLNVLINSQWKSRYCCIKDGQLHFYQDRNKTKNAAQPVSLIGCDIIPQPTQDHLYSFRILQNGEELATLEAKSSEDMGHWLGLLLLESGSRSDPEDFTYDYVDADRVSCIVSAAKNSYFLMQRKYCEPNTYIDAPRGQRYQQDDLYDDVDMSDIQGDEPKSEEKGEAEDKMYLDLIPTRSFLHSVGIKSLCQALGSPGPERVSGKKDNEESERGTLSCREQDSSGQVTEETKQVTEDPPQQTSPGTPIIGPSVSASPRLEKSNKERVKATNHVAIETLLGKNRTEAEIKRFTEEKEKLEKEREEIRVQLAQLRKERREMKETVTNCPDKGLLTDLEDKLRLKEEQCKERESYRVDLELKLVEVKENLRKAELGPATLGTSVEPAHLDTTAPSIKSCSPTHAPECSPVTATVGSPVNSAVALKSRPQPIVTTGKVLQKAKEWEKKGAS.

2 disordered regions span residues 67–110 (KEAQ…PPPK) and 132–168 (EPYN…QQHQ). The region spanning 181 to 277 (DAMICAFLWR…WLKVIQDISG (97 aa)) is the PH 1 domain. A disordered region spans residues 294–326 (QRQIHPKAEGTDRHSGASESGSSTDGHPETPEI). Residues 299-309 (PKAEGTDRHSG) show a composition bias toward basic and acidic residues. The PH 2 domain occupies 359 to 453 (ALETSNYLNV…WLGLLLLESG (95 aa)). Disordered regions lie at residues 500–532 (RGQR…GEAE) and 558–631 (LGSP…KERV). Composition is skewed to basic and acidic residues over residues 521–532 (DEPKSEEKGEAE), 566–577 (VSGKKDNEESER), and 622–631 (RLEKSNKERV). Residues 642-737 (LLGKNRTEAE…KENLRKAELG (96 aa)) adopt a coiled-coil conformation.

In terms of assembly, interacts with src.

It localises to the cytoplasm. In terms of biological role, may play a role in a signaling cascade by enhancing the kinase activity of src. Contributes to src-regulated transcription activation. The sequence is that of Actin filament-associated protein 1-like 2 (afap1l2) from Xenopus laevis (African clawed frog).